Reading from the N-terminus, the 553-residue chain is Urocanate hydratase (553 aa).

Residues 45-46 (GG), Q123, 169-171 (GMG), D189, R194, 235-236 (NA), 256-260 (QTSAH), 266-267 (YV), Y315, and G485 each bind NAD(+).

Belongs to the urocanase family. NAD(+) is required as a cofactor.

It is found in the cytoplasm. The catalysed reaction is 4-imidazolone-5-propanoate = trans-urocanate + H2O. The protein operates within amino-acid degradation; L-histidine degradation into L-glutamate; N-formimidoyl-L-glutamate from L-histidine: step 2/3. Catalyzes the conversion of urocanate to 4-imidazolone-5-propionate. The protein is Urocanate hydratase of Staphylococcus saprophyticus subsp. saprophyticus (strain ATCC 15305 / DSM 20229 / NCIMB 8711 / NCTC 7292 / S-41).